The primary structure comprises 802 residues: Phenylalanine--tRNA ligase beta subunit (802 aa).

The region spanning 38-149 (KSSLKPFVIA…ADAPVGTSFA (112 aa)) is the tRNA-binding domain. Residues 399–474 (HKPKIVSFPI…RIHGVDNIAP (76 aa)) form the B5 domain. D452, D458, E461, and E462 together coordinate Mg(2+). Positions 708-801 (SAFQAVKRDF…VGKQTGGVLR (94 aa)) constitute an FDX-ACB domain.

This sequence belongs to the phenylalanyl-tRNA synthetase beta subunit family. Type 1 subfamily. Tetramer of two alpha and two beta subunits. The cofactor is Mg(2+).

The protein resides in the cytoplasm. It carries out the reaction tRNA(Phe) + L-phenylalanine + ATP = L-phenylalanyl-tRNA(Phe) + AMP + diphosphate + H(+). The sequence is that of Phenylalanine--tRNA ligase beta subunit from Mesorhizobium japonicum (strain LMG 29417 / CECT 9101 / MAFF 303099) (Mesorhizobium loti (strain MAFF 303099)).